A 334-amino-acid polypeptide reads, in one-letter code: Lipoyl synthase (334 aa).

Residues 8–33 (LNNDTRPKVEAPARPRHPEKAHRPDT) form a disordered region. Positions 12–33 (TRPKVEAPARPRHPEKAHRPDT) are enriched in basic and acidic residues. Cys-68, Cys-73, Cys-79, Cys-94, Cys-98, Cys-101, and Ser-307 together coordinate [4Fe-4S] cluster. The 217-residue stretch at 80 to 296 (WEKRHATFMI…ETTAYAKGFL (217 aa)) folds into the Radical SAM core domain.

It belongs to the radical SAM superfamily. Lipoyl synthase family. The cofactor is [4Fe-4S] cluster.

It is found in the cytoplasm. It carries out the reaction [[Fe-S] cluster scaffold protein carrying a second [4Fe-4S](2+) cluster] + N(6)-octanoyl-L-lysyl-[protein] + 2 oxidized [2Fe-2S]-[ferredoxin] + 2 S-adenosyl-L-methionine + 4 H(+) = [[Fe-S] cluster scaffold protein] + N(6)-[(R)-dihydrolipoyl]-L-lysyl-[protein] + 4 Fe(3+) + 2 hydrogen sulfide + 2 5'-deoxyadenosine + 2 L-methionine + 2 reduced [2Fe-2S]-[ferredoxin]. The protein operates within protein modification; protein lipoylation via endogenous pathway; protein N(6)-(lipoyl)lysine from octanoyl-[acyl-carrier-protein]: step 2/2. Catalyzes the radical-mediated insertion of two sulfur atoms into the C-6 and C-8 positions of the octanoyl moiety bound to the lipoyl domains of lipoate-dependent enzymes, thereby converting the octanoylated domains into lipoylated derivatives. The sequence is that of Lipoyl synthase from Methylorubrum populi (strain ATCC BAA-705 / NCIMB 13946 / BJ001) (Methylobacterium populi).